The sequence spans 379 residues: 1-deoxy-D-xylulose 5-phosphate reductoisomerase (379 aa).

Residues Thr10, Gly11, Ser12, Ile13, Arg38, Asn39, and Asn121 each coordinate NADPH. Lys122 is a 1-deoxy-D-xylulose 5-phosphate binding site. Glu123 lines the NADPH pocket. Asp147 contributes to the Mn(2+) binding site. 1-deoxy-D-xylulose 5-phosphate is bound by residues Ser148, Glu149, Ser173, and His196. Glu149 is a binding site for Mn(2+). Gly202 serves as a coordination point for NADPH. Residues Ser209, Asn214, Lys215, and Glu218 each coordinate 1-deoxy-D-xylulose 5-phosphate. Glu218 contacts Mn(2+).

Belongs to the DXR family. Mg(2+) is required as a cofactor. The cofactor is Mn(2+).

It catalyses the reaction 2-C-methyl-D-erythritol 4-phosphate + NADP(+) = 1-deoxy-D-xylulose 5-phosphate + NADPH + H(+). It participates in isoprenoid biosynthesis; isopentenyl diphosphate biosynthesis via DXP pathway; isopentenyl diphosphate from 1-deoxy-D-xylulose 5-phosphate: step 1/6. Catalyzes the NADPH-dependent rearrangement and reduction of 1-deoxy-D-xylulose-5-phosphate (DXP) to 2-C-methyl-D-erythritol 4-phosphate (MEP). In Chlamydia muridarum (strain MoPn / Nigg), this protein is 1-deoxy-D-xylulose 5-phosphate reductoisomerase.